Consider the following 356-residue polypeptide: S-adenosylmethionine:tRNA ribosyltransferase-isomerase (356 aa).

This sequence belongs to the QueA family. As to quaternary structure, monomer.

It localises to the cytoplasm. The enzyme catalyses 7-aminomethyl-7-carbaguanosine(34) in tRNA + S-adenosyl-L-methionine = epoxyqueuosine(34) in tRNA + adenine + L-methionine + 2 H(+). Its pathway is tRNA modification; tRNA-queuosine biosynthesis. Its function is as follows. Transfers and isomerizes the ribose moiety from AdoMet to the 7-aminomethyl group of 7-deazaguanine (preQ1-tRNA) to give epoxyqueuosine (oQ-tRNA). The polypeptide is S-adenosylmethionine:tRNA ribosyltransferase-isomerase (Enterobacter sp. (strain 638)).